Reading from the N-terminus, the 138-residue chain is Large ribosomal subunit protein uL16 (138 aa).

This sequence belongs to the universal ribosomal protein uL16 family. In terms of assembly, part of the 50S ribosomal subunit.

Binds 23S rRNA and is also seen to make contacts with the A and possibly P site tRNAs. This Mycoplasmoides gallisepticum (strain R(low / passage 15 / clone 2)) (Mycoplasma gallisepticum) protein is Large ribosomal subunit protein uL16.